A 238-amino-acid polypeptide reads, in one-letter code: Urease subunit alpha (238 aa).

The urease gamma stretch occupies residues 1–102; that stretch reads MKLTPKELDK…LVTVHTPIEA (102 aa). The segment at 103–238 is urease beta; sequence NGKLVPGELF…DDNYVKTIKE (136 aa).

The protein in the N-terminal section; belongs to the urease gamma subunit family. It in the C-terminal section; belongs to the urease beta subunit family. In terms of assembly, heterohexamer of 3 UreA (alpha) and 3 UreB (beta) subunits. Four heterohexamers assemble to form a 16 nm dodecameric complex.

It catalyses the reaction urea + 2 H2O + H(+) = hydrogencarbonate + 2 NH4(+). It participates in nitrogen metabolism; urea degradation; CO(2) and NH(3) from urea (urease route): step 1/1. The sequence is that of Urease subunit alpha from Helicobacter pylori (strain J99 / ATCC 700824) (Campylobacter pylori J99).